Reading from the N-terminus, the 394-residue chain is MAVLDLALQGLAIFGCILFFVLWFMHFLSIVYTRLHLNKKVSDKQPYSKLPGVSLLKPLKGVDSNLINNLETFFELDYPKFEILLCVQDLDDPAVDVCKKLLGKYPSVDAKLFIGGKKVGINPKINNLMPGYEVAKYDLIWICDSGIKVKPDTLTDMANQMTEKVGLVHGLPYVADRQGFAATLEQVYFGTSHPRSYISANVTGIKCVTGMSCLMRKEVLDQAGGLIAFAQYIAEDYFMAKAIADRGWKFSMATQVAMQNSGCYSISQFQSRMIRWAKLRINMLPATIICEPISECFVASLIIGWAAHHIFRWDIMVFFMCHCLAWFIFDYIQLRGVQGGPLNFSKLDYAVAWFIRESMTIYIFLSALWDPTISWRTGRYRLRCGGTAEEILDV.

The Lumenal portion of the chain corresponds to 1–10 (MAVLDLALQG). A helical membrane pass occupies residues 11-32 (LAIFGCILFFVLWFMHFLSIVY). Residues 33 to 195 (TRLHLNKKVS…QVYFGTSHPR (163 aa)) are Cytoplasmic-facing. Asp92 is a short sequence motif (D1). Position 144 (Asp144) is a short sequence motif, D2. The chain crosses the membrane as a helical span at residues 196–215 (SYISANVTGIKCVTGMSCLM). Residues 216–287 (RKEVLDQAGG…KLRINMLPAT (72 aa)) lie on the Lumenal side of the membrane. A short sequence motif (D3) is located at residue Asp236. Asp236 serves as the catalytic Proton acceptor. The (Q/R)XXRW signature appears at 272–276 (RMIRW). Residues 288–304 (IICEPISECFVASLIIG) traverse the membrane as a helical segment. The Cytoplasmic portion of the chain corresponds to 305-309 (WAAHH). A helical transmembrane segment spans residues 310-328 (IFRWDIMVFFMCHCLAWFI). Topologically, residues 329-348 (FDYIQLRGVQGGPLNFSKLD) are lumenal. Residues 349–369 (YAVAWFIRESMTIYIFLSALW) form a helical membrane-spanning segment. Residues 370–394 (DPTISWRTGRYRLRCGGTAEEILDV) are Cytoplasmic-facing.

Belongs to the glycosyltransferase 2 family.

It localises to the golgi apparatus membrane. It catalyses the reaction an N-acylsphing-4-enine + UDP-alpha-D-glucose = a beta-D-glucosyl-(1&lt;-&gt;1')-N-acylsphing-4-enine + UDP + H(+). The enzyme catalyses UDP-alpha-D-xylose + an N-acylsphing-4-enine = a beta-D-xylosyl-(1&lt;-&gt;1')-N-acylsphing-4-enine + UDP + H(+). It carries out the reaction N-(9Z-octadecenoyl)-sphing-4-enine + UDP-alpha-D-xylose = beta-D-xylosyl-(1&lt;-&gt;1')-N-(9Z-octadecenoyl)-sphing-4-enine + UDP + H(+). It participates in lipid metabolism; sphingolipid metabolism. Its function is as follows. Participates in the initial step of the glucosylceramide-based glycosphingolipid/GSL synthetic pathway at the cytosolic surface of the Golgi. Catalyzes the transfer of glucose from UDP-glucose to ceramide to produce glucosylceramide/GlcCer (such as beta-D-glucosyl-(1&lt;-&gt;1')-N-acylsphing-4-enine). Glucosylceramide is the core component of glycosphingolipids/GSLs, amphipathic molecules consisting of a ceramide lipid moiety embedded in the outer leaflet of the membrane, linked to one of hundreds of different externally oriented oligosaccharide structures. Glycosphingolipids are essential components of membrane microdomains that mediate membrane trafficking and signal transduction. They are implicated in many fundamental cellular processes, including growth, differentiation, migration, morphogenesis, cell-to-cell and cell-to-matrix interactions. Catalyzes the synthesis of xylosylceramide/XylCer (such as beta-D-xylosyl-(1&lt;-&gt;1')-N-acylsphing-4-enine) using UDP-Xyl as xylose donor. This chain is Ceramide glucosyltransferase-B (ugcg-b), found in Xenopus laevis (African clawed frog).